Here is a 422-residue protein sequence, read N- to C-terminus: 4-hydroxy-3-methylbut-2-en-1-yl diphosphate synthase (flavodoxin) (422 aa).

Positions 316, 319, 362, and 369 each coordinate [4Fe-4S] cluster.

Belongs to the IspG family. [4Fe-4S] cluster serves as cofactor.

The catalysed reaction is (2E)-4-hydroxy-3-methylbut-2-enyl diphosphate + oxidized [flavodoxin] + H2O + 2 H(+) = 2-C-methyl-D-erythritol 2,4-cyclic diphosphate + reduced [flavodoxin]. It participates in isoprenoid biosynthesis; isopentenyl diphosphate biosynthesis via DXP pathway; isopentenyl diphosphate from 1-deoxy-D-xylulose 5-phosphate: step 5/6. Converts 2C-methyl-D-erythritol 2,4-cyclodiphosphate (ME-2,4cPP) into 1-hydroxy-2-methyl-2-(E)-butenyl 4-diphosphate. In Ehrlichia ruminantium (strain Welgevonden), this protein is 4-hydroxy-3-methylbut-2-en-1-yl diphosphate synthase (flavodoxin).